A 60-amino-acid polypeptide reads, in one-letter code: DNA gyrase inhibitor YacG (60 aa).

Cys-15, Cys-18, Cys-30, and Cys-34 together coordinate Zn(2+).

This sequence belongs to the DNA gyrase inhibitor YacG family. Interacts with GyrB. Requires Zn(2+) as cofactor.

Inhibits all the catalytic activities of DNA gyrase by preventing its interaction with DNA. Acts by binding directly to the C-terminal domain of GyrB, which probably disrupts DNA binding by the gyrase. The sequence is that of DNA gyrase inhibitor YacG from Nitrobacter hamburgensis (strain DSM 10229 / NCIMB 13809 / X14).